We begin with the raw amino-acid sequence, 499 residues long: Bestrophin homolog 22 (499 aa).

A run of 4 helical transmembrane segments spans residues 29 to 49 (WKAV…ISCI), 77 to 97 (IPLT…WGSI), 235 to 255 (LVYP…CLIG), and 267 to 287 (GIDL…MGWM). A compositionally biased stretch (basic and acidic residues) spans 417–432 (HNAKHAKQRGLERANS). Disordered regions lie at residues 417–455 (HNAK…ANGS) and 474–499 (TSNP…TSRH).

It belongs to the anion channel-forming bestrophin (TC 1.A.46) family. Calcium-sensitive chloride channel subfamily. Forms oligomers.

It localises to the cell membrane. Forms chloride channels. This Caenorhabditis elegans protein is Bestrophin homolog 22 (best-22).